Consider the following 373-residue polypeptide: Queuine tRNA-ribosyltransferase (373 aa).

Asp93 (proton acceptor) is an active-site residue. Residues 93–97 (DSGGF), Asp147, Gln189, and Gly216 each bind substrate. The RNA binding stretch occupies residues 247-253 (GVGAPED). Asp266 functions as the Nucleophile in the catalytic mechanism. Residues 271-275 (TRIAR) are RNA binding; important for wobble base 34 recognition. Zn(2+)-binding residues include Cys304, Cys306, Cys309, and His335.

This sequence belongs to the queuine tRNA-ribosyltransferase family. In terms of assembly, homodimer. Within each dimer, one monomer is responsible for RNA recognition and catalysis, while the other monomer binds to the replacement base PreQ1. The cofactor is Zn(2+).

It catalyses the reaction 7-aminomethyl-7-carbaguanine + guanosine(34) in tRNA = 7-aminomethyl-7-carbaguanosine(34) in tRNA + guanine. The protein operates within tRNA modification; tRNA-queuosine biosynthesis. In terms of biological role, catalyzes the base-exchange of a guanine (G) residue with the queuine precursor 7-aminomethyl-7-deazaguanine (PreQ1) at position 34 (anticodon wobble position) in tRNAs with GU(N) anticodons (tRNA-Asp, -Asn, -His and -Tyr). Catalysis occurs through a double-displacement mechanism. The nucleophile active site attacks the C1' of nucleotide 34 to detach the guanine base from the RNA, forming a covalent enzyme-RNA intermediate. The proton acceptor active site deprotonates the incoming PreQ1, allowing a nucleophilic attack on the C1' of the ribose to form the product. After dissociation, two additional enzymatic reactions on the tRNA convert PreQ1 to queuine (Q), resulting in the hypermodified nucleoside queuosine (7-(((4,5-cis-dihydroxy-2-cyclopenten-1-yl)amino)methyl)-7-deazaguanosine). The chain is Queuine tRNA-ribosyltransferase from Halothermothrix orenii (strain H 168 / OCM 544 / DSM 9562).